The sequence spans 696 residues: Methionine--tRNA ligase (696 aa).

Positions 12-22 (PYANGPLHLGH) match the 'HIGH' region motif. The Zn(2+) site is built by C143, C146, C156, and C159. Residues 330-334 (KMSKS) carry the 'KMSKS' region motif. K333 is an ATP binding site. A tRNA-binding domain is found at 593–696 (DFAKLDLRIG…AGAQPGMPVR (104 aa)).

The protein belongs to the class-I aminoacyl-tRNA synthetase family. MetG type 1 subfamily. As to quaternary structure, homodimer. Zn(2+) serves as cofactor.

Its subcellular location is the cytoplasm. The enzyme catalyses tRNA(Met) + L-methionine + ATP = L-methionyl-tRNA(Met) + AMP + diphosphate. Its function is as follows. Is required not only for elongation of protein synthesis but also for the initiation of all mRNA translation through initiator tRNA(fMet) aminoacylation. This chain is Methionine--tRNA ligase, found in Xanthomonas campestris pv. campestris (strain 8004).